The primary structure comprises 107 residues: MNKKELFDAFDGFSQNLMVTLADIEAMKKQVQGLVEENTILRLENTKLRERLSQLEHENLAKTSSKQGKDHLEGIYDEGFHICNFFYGQRRENDEECMFCRELLDRK.

His81, Cys83, Cys97, and Cys100 together coordinate Zn(2+).

Belongs to the YabA family. As to quaternary structure, homotetramer. Interacts with both DnaA and DnaN, acting as a bridge between these two proteins. It depends on Zn(2+) as a cofactor.

It localises to the cytoplasm. Its subcellular location is the nucleoid. Its function is as follows. Involved in control of chromosome replication initiation. Inhibits the cooperative binding of DnaA to the oriC region, thus negatively regulating initiation of chromosome replication. Inhibits the ability of DnaA-ATP to form a helix on DNA; does not disassemble preformed DnaA-DNA helices. Decreases the residence time of DnaA on the chromosome at its binding sites (oriC, replication forks and promoter-binding sites). Tethers DnaA to the replication machinery via the DNA polymerase beta sliding clamp subunit (dnaN). Associates with oriC and other DnaA targets on the chromosome in a DnaA-dependent manner. In Streptococcus equi subsp. zooepidemicus (strain MGCS10565), this protein is Replication initiation control protein YabA.